Consider the following 95-residue polypeptide: MSCQQNQQQCQPLPKCPSPKCPPKSSAQCLPPASSCCAPRPGCCGGPSSEGGCCLSHHRCCRSHRCRRQSSNSCDRGSGQQDGASDCGYGSGGCC.

Low complexity predominate over residues 1 to 13 (MSCQQNQQQCQPL). 2 disordered regions span residues 1–29 (MSCQ…SAQC) and 68–95 (RQSS…GGCC).

Belongs to the LCE family. As to expression, skin-specific. Expression was readily detected in adult trunk skin, adult arm skin, fetal skin, penal skin, vulva, esophagus and tongue. Not expressed in the cervix, rectum, lung, colon, or placenta.

A structural component of the cornified envelope of the stratum corneum involved in innate cutaneous host defense. Possesses defensin-like antimicrobial activity against a broad spectrum of Gram-positive and Gram-negative bacteria, both aerobic and anaerobic species. Upon inflammation, may regulate skin barrier repair by shaping cutaneous microbiota composition and immune response to bacterial antigens. The protein is Late cornified envelope protein 3B of Homo sapiens (Human).